The primary structure comprises 338 residues: Ketol-acid reductoisomerase (NADP(+)) (338 aa).

The 181-residue stretch at 1–181 (MKVFYDKDAD…GGGRAGIIET (181 aa)) folds into the KARI N-terminal Rossmann domain. Residues 24–27 (YGSQ), R47, and S52 each bind NADP(+). H107 is an active-site residue. G133 provides a ligand contact to NADP(+). The 146-residue stretch at 182-327 (NFREETETDL…SKLRAMMPWI (146 aa)) folds into the KARI C-terminal knotted domain. Mg(2+)-binding residues include D190, E194, E226, and E230. S251 provides a ligand contact to substrate.

Belongs to the ketol-acid reductoisomerase family. Mg(2+) serves as cofactor.

The catalysed reaction is (2R)-2,3-dihydroxy-3-methylbutanoate + NADP(+) = (2S)-2-acetolactate + NADPH + H(+). The enzyme catalyses (2R,3R)-2,3-dihydroxy-3-methylpentanoate + NADP(+) = (S)-2-ethyl-2-hydroxy-3-oxobutanoate + NADPH + H(+). It participates in amino-acid biosynthesis; L-isoleucine biosynthesis; L-isoleucine from 2-oxobutanoate: step 2/4. The protein operates within amino-acid biosynthesis; L-valine biosynthesis; L-valine from pyruvate: step 2/4. In terms of biological role, involved in the biosynthesis of branched-chain amino acids (BCAA). Catalyzes an alkyl-migration followed by a ketol-acid reduction of (S)-2-acetolactate (S2AL) to yield (R)-2,3-dihydroxy-isovalerate. In the isomerase reaction, S2AL is rearranged via a Mg-dependent methyl migration to produce 3-hydroxy-3-methyl-2-ketobutyrate (HMKB). In the reductase reaction, this 2-ketoacid undergoes a metal-dependent reduction by NADPH to yield (R)-2,3-dihydroxy-isovalerate. In Paraburkholderia xenovorans (strain LB400), this protein is Ketol-acid reductoisomerase (NADP(+)).